We begin with the raw amino-acid sequence, 173 residues long: Adenine phosphoribosyltransferase (173 aa).

It belongs to the purine/pyrimidine phosphoribosyltransferase family. In terms of assembly, homodimer.

The protein resides in the cytoplasm. It catalyses the reaction AMP + diphosphate = 5-phospho-alpha-D-ribose 1-diphosphate + adenine. The protein operates within purine metabolism; AMP biosynthesis via salvage pathway; AMP from adenine: step 1/1. Functionally, catalyzes a salvage reaction resulting in the formation of AMP, that is energically less costly than de novo synthesis. The sequence is that of Adenine phosphoribosyltransferase from Ureaplasma parvum serovar 3 (strain ATCC 27815 / 27 / NCTC 11736).